The chain runs to 264 residues: tRNA pseudouridine synthase A (264 aa).

Aspartate 51 acts as the Nucleophile in catalysis. Tyrosine 109 lines the substrate pocket.

This sequence belongs to the tRNA pseudouridine synthase TruA family. Homodimer.

It catalyses the reaction uridine(38/39/40) in tRNA = pseudouridine(38/39/40) in tRNA. Functionally, formation of pseudouridine at positions 38, 39 and 40 in the anticodon stem and loop of transfer RNAs. In Vibrio campbellii (strain ATCC BAA-1116), this protein is tRNA pseudouridine synthase A.